The sequence spans 134 residues: Small ribosomal subunit protein uS9c (134 aa).

Residues 105-114 (DHHLTRDARA) are compositionally biased toward basic and acidic residues. The tract at residues 105 to 134 (DHHLTRDARAKERKKYGLHKARKAPQYSKR) is disordered. Residues 115–134 (KERKKYGLHKARKAPQYSKR) are compositionally biased toward basic residues.

Belongs to the universal ribosomal protein uS9 family.

It localises to the plastid. It is found in the cyanelle. In Cyanophora paradoxa, this protein is Small ribosomal subunit protein uS9c (rps9).